Here is a 199-residue protein sequence, read N- to C-terminus: dTTP/UTP pyrophosphatase (199 aa).

Aspartate 73 functions as the Proton acceptor in the catalytic mechanism.

This sequence belongs to the Maf family. YhdE subfamily. It depends on a divalent metal cation as a cofactor.

The protein resides in the cytoplasm. It catalyses the reaction dTTP + H2O = dTMP + diphosphate + H(+). It carries out the reaction UTP + H2O = UMP + diphosphate + H(+). Its function is as follows. Nucleoside triphosphate pyrophosphatase that hydrolyzes dTTP and UTP. May have a dual role in cell division arrest and in preventing the incorporation of modified nucleotides into cellular nucleic acids. The chain is dTTP/UTP pyrophosphatase from Caldicellulosiruptor saccharolyticus (strain ATCC 43494 / DSM 8903 / Tp8T 6331).